We begin with the raw amino-acid sequence, 434 residues long: Trigger factor (434 aa).

One can recognise a PPIase FKBP-type domain in the interval 161–246 (KDIVTIDFKG…IHKVEEPQLP (86 aa)).

Belongs to the FKBP-type PPIase family. Tig subfamily.

Its subcellular location is the cytoplasm. The enzyme catalyses [protein]-peptidylproline (omega=180) = [protein]-peptidylproline (omega=0). Functionally, involved in protein export. Acts as a chaperone by maintaining the newly synthesized protein in an open conformation. Functions as a peptidyl-prolyl cis-trans isomerase. The sequence is that of Trigger factor from Marinobacter nauticus (strain ATCC 700491 / DSM 11845 / VT8) (Marinobacter aquaeolei).